The sequence spans 212 residues: Imidazole glycerol phosphate synthase subunit HisH (212 aa).

The 209-residue stretch at 3–211 (LIAVIDYDMG…VQQVQKLALV (209 aa)) folds into the Glutamine amidotransferase type-1 domain. Cysteine 81 acts as the Nucleophile in catalysis. Residues histidine 186 and glutamate 188 contribute to the active site.

In terms of assembly, heterodimer of HisH and HisF.

It localises to the cytoplasm. It carries out the reaction 5-[(5-phospho-1-deoxy-D-ribulos-1-ylimino)methylamino]-1-(5-phospho-beta-D-ribosyl)imidazole-4-carboxamide + L-glutamine = D-erythro-1-(imidazol-4-yl)glycerol 3-phosphate + 5-amino-1-(5-phospho-beta-D-ribosyl)imidazole-4-carboxamide + L-glutamate + H(+). It catalyses the reaction L-glutamine + H2O = L-glutamate + NH4(+). It functions in the pathway amino-acid biosynthesis; L-histidine biosynthesis; L-histidine from 5-phospho-alpha-D-ribose 1-diphosphate: step 5/9. Its function is as follows. IGPS catalyzes the conversion of PRFAR and glutamine to IGP, AICAR and glutamate. The HisH subunit catalyzes the hydrolysis of glutamine to glutamate and ammonia as part of the synthesis of IGP and AICAR. The resulting ammonia molecule is channeled to the active site of HisF. This chain is Imidazole glycerol phosphate synthase subunit HisH, found in Microcystis aeruginosa (strain NIES-843 / IAM M-2473).